The primary structure comprises 401 residues: Riboflavin biosynthesis protein RibBA (401 aa).

The tract at residues 1-203 (MTDFQFSKVE…IQQLQEYRRK (203 aa)) is DHBP synthase. D-ribulose 5-phosphate is bound by residues 30 to 31 (RE), Asp-35, 142 to 146 (RNGHT), and Glu-166. Glu-31 is a Mg(2+) binding site. His-145 is a Mg(2+) binding site. The GTP cyclohydrolase II stretch occupies residues 204 to 401 (HDSLVKQISV…QIKMGHMFNF (198 aa)). Residue 254-258 (RIHSE) coordinates GTP. 3 residues coordinate Zn(2+): Cys-259, Cys-270, and Cys-272. GTP contacts are provided by residues Gln-275, 297 to 299 (EGR), and Thr-319. Asp-331 functions as the Proton acceptor; for GTP cyclohydrolase activity in the catalytic mechanism. The active-site Nucleophile; for GTP cyclohydrolase activity is Arg-333. Thr-354 and Lys-359 together coordinate GTP.

In the N-terminal section; belongs to the DHBP synthase family. The protein in the C-terminal section; belongs to the GTP cyclohydrolase II family. Requires Mg(2+) as cofactor. It depends on Mn(2+) as a cofactor. The cofactor is Zn(2+).

The enzyme catalyses D-ribulose 5-phosphate = (2S)-2-hydroxy-3-oxobutyl phosphate + formate + H(+). The catalysed reaction is GTP + 4 H2O = 2,5-diamino-6-hydroxy-4-(5-phosphoribosylamino)-pyrimidine + formate + 2 phosphate + 3 H(+). The protein operates within cofactor biosynthesis; riboflavin biosynthesis; 2-hydroxy-3-oxobutyl phosphate from D-ribulose 5-phosphate: step 1/1. Its pathway is cofactor biosynthesis; riboflavin biosynthesis; 5-amino-6-(D-ribitylamino)uracil from GTP: step 1/4. Catalyzes the conversion of D-ribulose 5-phosphate to formate and 3,4-dihydroxy-2-butanone 4-phosphate. Functionally, catalyzes the conversion of GTP to 2,5-diamino-6-ribosylamino-4(3H)-pyrimidinone 5'-phosphate (DARP), formate and pyrophosphate. This Actinobacillus pleuropneumoniae serotype 3 (strain JL03) protein is Riboflavin biosynthesis protein RibBA.